A 72-amino-acid chain; its full sequence is Osmotically-inducible lipoprotein B (72 aa).

A signal peptide spans 1-23 (MFMTSKKMAAAVLAITVAMSLSA). C24 carries the N-palmitoyl cysteine lipid modification. Residue C24 is the site of S-diacylglycerol cysteine attachment.

The protein resides in the cell membrane. Its function is as follows. Provides resistance to osmotic stress. May be important for stationary-phase survival. This is Osmotically-inducible lipoprotein B (osmB) from Salmonella typhimurium (strain LT2 / SGSC1412 / ATCC 700720).